Consider the following 191-residue polypeptide: SCO2-like protein RP031 (191 aa).

Belongs to the SCO1/2 family.

The sequence is that of SCO2-like protein RP031 from Rickettsia prowazekii (strain Madrid E).